A 473-amino-acid chain; its full sequence is Gamma-aminobutyric acid receptor subunit beta-3 (473 aa).

A signal peptide spans 1-25; sequence MWGLAGGRLFGIFSAPVLVAVVCCA. The Extracellular segment spans residues 26-246; that stretch reads QSVNDPGNMS…FRLKRNIGYF (221 aa). Residues asparagine 33 and asparagine 105 are each glycosylated (N-linked (GlcNAc...) asparagine). A benzamidine-binding site is contributed by 120–122; it reads DTY. Tyrosine 122 contributes to the 4-aminobutanoate binding site. Tyrosine 122 is a binding site for histamine. Residues cysteine 161 and cysteine 175 are joined by a disulfide bond. Asparagine 174 carries an N-linked (GlcNAc...) asparagine glycan. 4-aminobutanoate-binding residues include glutamate 180 and tyrosine 182. Benzamidine-binding positions include 180-182 and phenylalanine 225; that span reads ESY. 181 to 182 is a binding site for histamine; sequence SY. A 4-aminobutanoate-binding site is contributed by threonine 227. A histamine-binding site is contributed by threonine 227. The chain crosses the membrane as a helical span at residues 247-267; it reads ILQTYMPSILITILSWVSFWI. Residues 268 to 271 lie on the Cytoplasmic side of the membrane; that stretch reads NYDA. The helical transmembrane segment at 272 to 292 threads the bilayer; that stretch reads SAARVALGITTVLTMTTINTH. At 293 to 304 the chain is on the extracellular side; the sequence is LRETLPKIPYVK. The chain crosses the membrane as a helical span at residues 305–328; the sequence is AIDMYLMGCFVFVFLALLEYAFVN. Over 329 to 447 the chain is Cytoplasmic; the sequence is YIFFGRGPQR…KIPDLTDVNA (119 aa). The helical transmembrane segment at 448–470 threads the bilayer; the sequence is IDRWSRIVFPFTFSLFNLVYWLY. Residues 471 to 473 are Extracellular-facing; that stretch reads YVN.

The protein belongs to the ligand-gated ion channel (TC 1.A.9) family. Gamma-aminobutyric acid receptor (TC 1.A.9.5) subfamily. GABRB3 sub-subfamily. As to quaternary structure, heteropentamer, formed by a combination of alpha (GABRA1-6), beta (GABRB1-3), gamma (GABRG1-3), delta (GABRD), epsilon (GABRE), rho (GABRR1-3), pi (GABRP) and theta (GABRQ) chains, each subunit exhibiting distinct physiological and pharmacological properties. Can form functional homopentamers (in vitro). Interacts with UBQLN1. May interact with KIF21B. Identified in a complex of 720 kDa composed of LHFPL4, NLGN2, GABRA1, GABRB2, GABRG2 and GABRB3. Interacts with LHFPL4. Interacts with GIT1; this interaction is required for synaptic GABRB3 surface stability and inhibitory synapse strength.

The protein resides in the postsynaptic cell membrane. Its subcellular location is the cell membrane. The protein localises to the cytoplasmic vesicle membrane. It carries out the reaction chloride(in) = chloride(out). Its activity is regulated as follows. Potentiated by histamine. In terms of biological role, beta subunit of the heteropentameric ligand-gated chloride channel gated by gamma-aminobutyric acid (GABA), a major inhibitory neurotransmitter in the brain. GABA-gated chloride channels, also named GABA(A) receptors (GABAAR), consist of five subunits arranged around a central pore and contain GABA active binding site(s) located at the alpha and beta subunit interface(s). GABAARs containing beta-3/GABRB3 subunit are found at both synaptic and extrasynaptic sites. When activated by GABA, GABAARs selectively allow the flow of chloride anions across the cell membrane down their electrochemical gradient. Chloride influx into the postsynaptic neuron following GABAAR opening decreases the neuron ability to generate a new action potential, thereby reducing nerve transmission. GABAARs containing alpha-1 and beta-3 subunits exhibit synaptogenic activity; the gamma-2 subunit being necessary but not sufficient to induce rapid synaptic contacts formation. Extrasynaptic beta-3 receptors contribute to the tonic GABAergic inhibition. GABAARs containing alpha-1, beta-3 and epsilon subunits may also permit spontaneous chloride channel activity while preserving the structural information required for GABA-gated openings. Beta-containing GABAARs can simultaneously bind GABA and histamine where histamine binds at the interface of two neighboring beta subunits, which may be involved in the regulation of sleep and wakefulness. Plays an important role in somatosensation and in the production of antinociception. The protein is Gamma-aminobutyric acid receptor subunit beta-3 of Homo sapiens (Human).